The chain runs to 461 residues: Cyclic 2,3-diphosphoglycerate synthetase (461 aa).

It belongs to the cyclic 2,3-diphosphoglycerate synthetase family.

Its subcellular location is the cytoplasm. The catalysed reaction is (2R)-2,3-bisphosphoglycerate + ATP + H(+) = cyclic (2R)-2,3-bisphosphoglycerate + ADP + phosphate. Functionally, catalyzes the formation of cyclic 2,3-diphosphoglycerate (cDPG) by formation of an intramolecular phosphoanhydride bond at the expense of ATP. This Methanosphaera stadtmanae (strain ATCC 43021 / DSM 3091 / JCM 11832 / MCB-3) protein is Cyclic 2,3-diphosphoglycerate synthetase.